Consider the following 146-residue polypeptide: Large ribosomal subunit protein bL9 (146 aa).

Belongs to the bacterial ribosomal protein bL9 family.

Its function is as follows. Binds to the 23S rRNA. This chain is Large ribosomal subunit protein bL9, found in Deinococcus geothermalis (strain DSM 11300 / CIP 105573 / AG-3a).